A 173-amino-acid chain; its full sequence is Fimbrial protein PrsE (173 aa).

An N-terminal signal peptide occupies residues 1–24; it reads MKKIRGLCLPVMLGAVLMSQHVHA.

The protein localises to the secreted. It localises to the fimbrium. Its function is as follows. Fimbriae (also called pili), polar filaments radiating from the surface of the bacterium to a length of 0.5-1.5 micrometers and numbering 100-300 per cell, enable bacteria to colonize the epithelium of specific host organs. The polypeptide is Fimbrial protein PrsE (prsE) (Escherichia coli).